The primary structure comprises 494 residues: MGFWGRNSFEADKKHILVTGGSQGLGKAIAKELVLRGANVTIVARTVTKLQEAVAELSDSKIHEDQQVSFESVDLTSYESVHSMIERLPFCPDHVVHCAGSCIPGFFTELDPSVFEKQMRQNYLASVYVCHAAIRRMKEISPSYSRRILLVGSLLSSLPIIGYSAYSPVKAAVRNLADSLRQECILYDIEVSVYLPSTILSPGYEQENTLKPELVLQMEGMDSVQTCEEAASHCMTGLDRGDFLIANESTGHLMKNHCRNSSPHDNPILEYLFALVSLLAWPFYRRKLDSLVYQYALEKGYRQPSSSRNSWIFTLLLTFTQLTIFYLSLNCLIENPYRMLRNTFPIWFIMQTLQIYIQSPRPPLTPKRLLAGAASMLIGSLLISFILVAFGAPLLHDFHLTYFCALTLSVFTVYPLASTLAFNTEQWQRFLTLKSFNVIGSMQLRSWGPIIGAWFGAFPIPLDWDRPWQAWPITIVIGAFLGYAFAAIVGEILQ.

The NADPH site is built by Gly-20, Ser-22, and Gly-24. Positions Gly-20 to Gly-24 match the GXSXG motif. NADP(+) is bound at residue Leu-25. NADPH-binding residues include Arg-45 and Lys-49. Residue Val-54 coordinates NADP(+). NADPH is bound by residues Asp-74 and Leu-75. A helical transmembrane segment spans residues Ile-148 to Pro-168. NADP(+) is bound by residues Tyr-166, Lys-170, and Ile-199. Residue Tyr-166 is the Proton acceptor of the active site. The active-site Lowers pKa of active site Tyr is the Lys-170. Transmembrane regions (helical) follow at residues His-264–Tyr-284, Ile-312–Leu-332, Leu-370–Phe-390, Tyr-402–Phe-422, Leu-444–Trp-464, and Ile-473–Leu-493.

It in the N-terminal section; belongs to the short-chain dehydrogenases/reductases (SDR) family. The protein in the C-terminal section; belongs to the PIGF family.

The protein resides in the endoplasmic reticulum membrane. The catalysed reaction is sphinganine + NADP(+) = 3-oxosphinganine + NADPH + H(+). It participates in glycolipid biosynthesis; glycosylphosphatidylinositol-anchor biosynthesis. Its pathway is lipid metabolism; sphingolipid metabolism. Functionally, acts in the GPI biosynthetic pathway between GlcNAc-PI synthesis and GPI transfer to protein. Required for the formation of complete GPI precursors CP1 and CP2. Catalyzes the reduction of 3'-oxosphinganine (3-ketodihydrosphingosine/KDS) to sphinganine (dihydrosphingosine/DHS), the second step of de novo sphingolipid biosynthesis. The polypeptide is PIGF/3-ketodihydrosphingosine reductase fusion protein (Schizosaccharomyces pombe (strain 972 / ATCC 24843) (Fission yeast)).